The chain runs to 279 residues: Esterase CG5412 (279 aa).

Active-site charge relay system residues include serine 133, aspartate 191, and histidine 218. The disordered stretch occupies residues glutamine 249 to aspartate 279.

Belongs to the LovG family.

This Drosophila melanogaster (Fruit fly) protein is Esterase CG5412.